The following is a 303-amino-acid chain: Probable 5-dehydro-4-deoxyglucarate dehydratase (303 aa).

This sequence belongs to the DapA family.

The enzyme catalyses 5-dehydro-4-deoxy-D-glucarate + H(+) = 2,5-dioxopentanoate + CO2 + H2O. It participates in carbohydrate acid metabolism; D-glucarate degradation; 2,5-dioxopentanoate from D-glucarate: step 2/2. The chain is Probable 5-dehydro-4-deoxyglucarate dehydratase from Pseudomonas syringae pv. syringae (strain B728a).